A 413-amino-acid chain; its full sequence is 2,3-bisphosphoglycerate-independent phosphoglycerate mutase (413 aa).

Belongs to the BPG-independent phosphoglycerate mutase family. A-PGAM subfamily.

The enzyme catalyses (2R)-2-phosphoglycerate = (2R)-3-phosphoglycerate. The protein operates within carbohydrate degradation; glycolysis; pyruvate from D-glyceraldehyde 3-phosphate: step 3/5. Functionally, catalyzes the interconversion of 2-phosphoglycerate and 3-phosphoglycerate. This is 2,3-bisphosphoglycerate-independent phosphoglycerate mutase from Sulfurisphaera tokodaii (strain DSM 16993 / JCM 10545 / NBRC 100140 / 7) (Sulfolobus tokodaii).